The primary structure comprises 114 residues: Large ribosomal subunit protein uL22 (114 aa).

Belongs to the universal ribosomal protein uL22 family. In terms of assembly, part of the 50S ribosomal subunit.

Its function is as follows. This protein binds specifically to 23S rRNA; its binding is stimulated by other ribosomal proteins, e.g. L4, L17, and L20. It is important during the early stages of 50S assembly. It makes multiple contacts with different domains of the 23S rRNA in the assembled 50S subunit and ribosome. The globular domain of the protein is located near the polypeptide exit tunnel on the outside of the subunit, while an extended beta-hairpin is found that lines the wall of the exit tunnel in the center of the 70S ribosome. This chain is Large ribosomal subunit protein uL22, found in Ehrlichia ruminantium (strain Gardel).